The following is a 305-amino-acid chain: Olfactory receptor 4B13 (305 aa).

Residues Met1–Cys25 are Extracellular-facing. Asn6 carries an N-linked (GlcNAc...) asparagine glycan. The helical transmembrane segment at Phe26–Ala46 threads the bilayer. The Cytoplasmic portion of the chain corresponds to Val47–Ser55. The chain crosses the membrane as a helical span at residues Pro56 to Val76. Over Pro77 to Cys95 the chain is Extracellular. Cys95 and Cys187 are oxidised to a cystine. The helical transmembrane segment at Leu96 to Met116 threads the bilayer. The Cytoplasmic portion of the chain corresponds to Ala117 to Met141. Residues Leu142–Ile162 form a helical membrane-spanning segment. Topologically, residues Pro163–Gly202 are extracellular. The chain crosses the membrane as a helical span at residues Leu203–Leu223. Over Arg224–Ser236 the chain is Cytoplasmic. The chain crosses the membrane as a helical span at residues Thr237 to Met257. Residues Arg258–Asp266 lie on the Extracellular side of the membrane. Residues Lys267–Leu287 form a helical membrane-spanning segment. Over Arg288–Ser305 the chain is Cytoplasmic.

Belongs to the G-protein coupled receptor 1 family.

The protein localises to the cell membrane. Its function is as follows. Odorant receptor. This is Olfactory receptor 4B13 from Mus musculus (Mouse).